We begin with the raw amino-acid sequence, 410 residues long: LL-diaminopimelate aminotransferase (410 aa).

2 residues coordinate substrate: tyrosine 15 and glycine 42. Pyridoxal 5'-phosphate contacts are provided by residues tyrosine 72, 108 to 109, tyrosine 132, asparagine 187, tyrosine 218, and 246 to 248; these read SK and SFS. Lysine 109, tyrosine 132, and asparagine 187 together coordinate substrate. Position 249 is an N6-(pyridoxal phosphate)lysine (lysine 249). Residues arginine 257 and asparagine 292 each coordinate pyridoxal 5'-phosphate. Asparagine 292 and arginine 388 together coordinate substrate.

It belongs to the class-I pyridoxal-phosphate-dependent aminotransferase family. LL-diaminopimelate aminotransferase subfamily. As to quaternary structure, homodimer. Pyridoxal 5'-phosphate is required as a cofactor.

It carries out the reaction (2S,6S)-2,6-diaminopimelate + 2-oxoglutarate = (S)-2,3,4,5-tetrahydrodipicolinate + L-glutamate + H2O + H(+). The protein operates within amino-acid biosynthesis; L-lysine biosynthesis via DAP pathway; LL-2,6-diaminopimelate from (S)-tetrahydrodipicolinate (aminotransferase route): step 1/1. Functionally, involved in the synthesis of meso-diaminopimelate (m-DAP or DL-DAP), required for both lysine and peptidoglycan biosynthesis. Catalyzes the direct conversion of tetrahydrodipicolinate to LL-diaminopimelate. The chain is LL-diaminopimelate aminotransferase from Geobacter metallireducens (strain ATCC 53774 / DSM 7210 / GS-15).